The following is a 335-amino-acid chain: Tetraacyldisaccharide 4'-kinase (335 aa).

Residue 51-58 (HVGGAGKT) participates in ATP binding.

It belongs to the LpxK family.

The catalysed reaction is a lipid A disaccharide + ATP = a lipid IVA + ADP + H(+). Its pathway is glycolipid biosynthesis; lipid IV(A) biosynthesis; lipid IV(A) from (3R)-3-hydroxytetradecanoyl-[acyl-carrier-protein] and UDP-N-acetyl-alpha-D-glucosamine: step 6/6. Transfers the gamma-phosphate of ATP to the 4'-position of a tetraacyldisaccharide 1-phosphate intermediate (termed DS-1-P) to form tetraacyldisaccharide 1,4'-bis-phosphate (lipid IVA). The sequence is that of Tetraacyldisaccharide 4'-kinase from Nitrobacter hamburgensis (strain DSM 10229 / NCIMB 13809 / X14).